A 68-amino-acid polypeptide reads, in one-letter code: Large ribosomal subunit protein uL29 (68 aa).

Belongs to the universal ribosomal protein uL29 family.

In Maricaulis maris (strain MCS10) (Caulobacter maris), this protein is Large ribosomal subunit protein uL29.